The following is a 116-amino-acid chain: Orphan antitoxin YagB (116 aa).

Belongs to the CbeA/YafW/YfjZ antitoxin family.

Functionally, putative antitoxin component of a type IV toxin-antitoxin (TA) system; its cognate toxin is unknown. The protein is Orphan antitoxin YagB (yagB) of Escherichia coli (strain K12).